The sequence spans 66 residues: Vesicular acetylcholine transporter (66 aa).

Residues glycine 1 to leucine 15 form a helical membrane-spanning segment. Over leucine 16–aspartate 66 the chain is Cytoplasmic. The disordered stretch occupies residues alanine 43–aspartate 66.

It belongs to the major facilitator superfamily. Vesicular transporter family. As to quaternary structure, interacts with SEC14L1.

It localises to the cytoplasmic vesicle. It is found in the secretory vesicle. Its subcellular location is the synaptic vesicle membrane. It carries out the reaction acetylcholine(out) + 2 H(+)(in) = acetylcholine(in) + 2 H(+)(out). The enzyme catalyses choline(in) + 2 H(+)(out) = choline(out) + 2 H(+)(in). The catalysed reaction is serotonin(in) + 2 H(+)(out) = serotonin(out) + 2 H(+)(in). Electrogenic antiporter that exchanges one cholinergic neurotransmitter, acetylcholine or choline, with two intravesicular protons across the membrane of synaptic vesicles. Uses the electrochemical proton gradient established by the V-type proton-pump ATPase to store neurotransmitters inside the vesicles prior to their release via exocytosis. Determines cholinergic vesicular quantal size at presynaptic nerve terminals in developing neuro-muscular junctions with an impact on motor neuron differentiation and innervation pattern. Part of forebrain cholinergic system, regulates hippocampal synapse transmissions that underlie spatial memory formation. Can transport serotonin. This is Vesicular acetylcholine transporter (SLC18A3) from Macaca fuscata fuscata (Japanese macaque).